A 520-amino-acid polypeptide reads, in one-letter code: MDNGLSRRHEISELLQLVDSTTTRAFHTSNGSPKSDCRNDSKPLKRYEELFGSFPAEGLGTSGFKDAIDLISRNSVDNASPGFLGKLVSAPSAPGIASDLFLSILNNNGHVQRAGPALTAIEKHTSLELARLFDLQGPHAGGVTVPGGAAGNLMAMLVARNIVAPESKQRGLTPGEYAIFVSDAAHYSVSNSANVIGLGNDSIIRVPALDDGTMDADALQRAVDQAGKDGKKPLLIAATSGSTVNGAFDPLDKIGEIAHRVGAWFHVDACWGGGVVFSDKLKHLMKGSHLADSIAFNPHKLLGVPLVCAFLLVNDLRTLWLANKLNAGYLFHDDAPKKNGVSSEQSANTNGSEKESWRHSKLLDTAPDVMKINDLASLTIQCSRRHDATKMFLHWLYYGTAGIAREVEQAVDSAKHLACLVRDHPRFELIWDPEQVFAQVCFYWKSASTPEKSGETLAEINSRNTRALFQGIEEMGWKVDFAPGKAKGEFLRIACNRLTTRQTVEKIVSELVELGESLGL.

Substrate is bound at residue 86-88; that stretch reads KLV. The residue at position 300 (Lys300) is an N6-(pyridoxal phosphate)lysine. Residues 338–357 form a disordered region; it reads KNGVSSEQSANTNGSEKESW. Residues 340-351 are compositionally biased toward polar residues; that stretch reads GVSSEQSANTNG. Position 492 (Arg492) interacts with substrate.

This sequence belongs to the group II decarboxylase family. It depends on pyridoxal 5'-phosphate as a cofactor.

The protein operates within mycotoxin biosynthesis. In terms of biological role, glutamate decarboxylase-like protein; part of the gene cluster that mediates the biosynthesis of butenolide, a mycotoxin that shows antibiotic activity but does not seem to play a major role in the spread of head blight in wheat. Butenolide is derived from glutamic acid via a 4-acetamido-2-butenoic acid intermediate. The predicted function of the NADH:flavin oxidoreductase FG08077, the cytochrome P450 monooxygenase FG08079, the decarboxylase FG08083, and the putative acetyltransferase FG08082 are consistent with this pathway, however, the respective activities of the butelonide biosynthesis cluster enzymes have still to be experimentally determined. This chain is Glutamate decarboxylase-like protein FG08083, found in Gibberella zeae (strain ATCC MYA-4620 / CBS 123657 / FGSC 9075 / NRRL 31084 / PH-1) (Wheat head blight fungus).